The following is a 248-amino-acid chain: Ribonuclease 3 (248 aa).

Residues 6–136 (LAYLQTLIGS…LIGAIYLDKG (131 aa)) enclose the RNase III domain. E49 contacts Mg(2+). Residue D53 is part of the active site. Mg(2+) is bound by residues D122 and E125. E125 is an active-site residue. Residues 163–231 (NYKSCLIEYS…AKEAMERIIA (69 aa)) enclose the DRBM domain.

Belongs to the ribonuclease III family. As to quaternary structure, homodimer. It depends on Mg(2+) as a cofactor.

The protein resides in the cytoplasm. It carries out the reaction Endonucleolytic cleavage to 5'-phosphomonoester.. Functionally, digests double-stranded RNA. Involved in the processing of primary rRNA transcript to yield the immediate precursors to the large and small rRNAs (23S and 16S). Processes some mRNAs, and tRNAs when they are encoded in the rRNA operon. Processes pre-crRNA and tracrRNA of type II CRISPR loci if present in the organism. The chain is Ribonuclease 3 from Chlorobium chlorochromatii (strain CaD3).